A 147-amino-acid chain; its full sequence is Hemoglobin subunit beta (147 aa).

Val-2 is modified (N-acetylvaline). One can recognise a Globin domain in the interval 3–147; it reads HLSAEEKGHI…VATALAHKYH (145 aa). Lys-60 carries the N6-acetyllysine modification. His-64 contributes to the heme b binding site. Lys-83 is modified (N6-acetyllysine). His-93 is a binding site for heme b. At Cys-94 the chain carries S-nitrosocysteine. An N6-acetyllysine modification is found at Lys-145.

The protein belongs to the globin family. Heterotetramer of two alpha chains and two beta chains. In terms of tissue distribution, red blood cells.

In terms of biological role, involved in oxygen transport from the lung to the various peripheral tissues. The polypeptide is Hemoglobin subunit beta (HBB) (Sminthopsis crassicaudata (Fat-tailed dunnart)).